Reading from the N-terminus, the 475-residue chain is tRNA-2-methylthio-N(6)-dimethylallyladenosine synthase (475 aa).

The 118-residue stretch at 3 to 120 (KKLHIKTWGC…LPEMIDQIRA (118 aa)) folds into the MTTase N-terminal domain. 6 residues coordinate [4Fe-4S] cluster: Cys12, Cys49, Cys83, Cys157, Cys161, and Cys164. The Radical SAM core domain occupies 143–375 (RADGPSAFVS…QDRITQQAMR (233 aa)). In terms of domain architecture, TRAM spans 378 to 441 (RQMVGTVQRI…TNSLRGVFIR (64 aa)).

This sequence belongs to the methylthiotransferase family. MiaB subfamily. In terms of assembly, monomer. It depends on [4Fe-4S] cluster as a cofactor.

Its subcellular location is the cytoplasm. It catalyses the reaction N(6)-dimethylallyladenosine(37) in tRNA + (sulfur carrier)-SH + AH2 + 2 S-adenosyl-L-methionine = 2-methylsulfanyl-N(6)-dimethylallyladenosine(37) in tRNA + (sulfur carrier)-H + 5'-deoxyadenosine + L-methionine + A + S-adenosyl-L-homocysteine + 2 H(+). Catalyzes the methylthiolation of N6-(dimethylallyl)adenosine (i(6)A), leading to the formation of 2-methylthio-N6-(dimethylallyl)adenosine (ms(2)i(6)A) at position 37 in tRNAs that read codons beginning with uridine. The chain is tRNA-2-methylthio-N(6)-dimethylallyladenosine synthase from Shewanella halifaxensis (strain HAW-EB4).